We begin with the raw amino-acid sequence, 214 residues long: Pyridoxine/pyridoxamine 5'-phosphate oxidase (214 aa).

Residues 8–11 (RTNY) and K66 each bind substrate. FMN-binding positions include 61–66 (RIVLIK), 76–77 (FT), R82, K83, and Q105. Positions 123, 127, and 131 each coordinate substrate. FMN is bound by residues 140–141 (QS) and W184. A substrate-binding site is contributed by 190 to 192 (RLH). R194 contacts FMN.

This sequence belongs to the pyridoxamine 5'-phosphate oxidase family. Homodimer. Requires FMN as cofactor.

The enzyme catalyses pyridoxamine 5'-phosphate + O2 + H2O = pyridoxal 5'-phosphate + H2O2 + NH4(+). It carries out the reaction pyridoxine 5'-phosphate + O2 = pyridoxal 5'-phosphate + H2O2. It functions in the pathway cofactor metabolism; pyridoxal 5'-phosphate salvage; pyridoxal 5'-phosphate from pyridoxamine 5'-phosphate: step 1/1. Its pathway is cofactor metabolism; pyridoxal 5'-phosphate salvage; pyridoxal 5'-phosphate from pyridoxine 5'-phosphate: step 1/1. Functionally, catalyzes the oxidation of either pyridoxine 5'-phosphate (PNP) or pyridoxamine 5'-phosphate (PMP) into pyridoxal 5'-phosphate (PLP). The polypeptide is Pyridoxine/pyridoxamine 5'-phosphate oxidase (Burkholderia mallei (strain NCTC 10247)).